A 214-amino-acid polypeptide reads, in one-letter code: UPF0758 protein (214 aa).

Residues 92–214 (VLSSWQALLD…ELSFRAEGLL (123 aa)) form the MPN domain. Zn(2+)-binding residues include H163, H165, and D176. The short motif at 163–176 (HNHPSGDPTPSQAD) is the JAMM motif element.

It belongs to the UPF0758 family.

This is UPF0758 protein from Rhodobacter capsulatus (Rhodopseudomonas capsulata).